We begin with the raw amino-acid sequence, 216 residues long: GTP cyclohydrolase 1 2 (216 aa).

The protein belongs to the GTP cyclohydrolase I family. As to quaternary structure, homomer.

It catalyses the reaction GTP + H2O = 7,8-dihydroneopterin 3'-triphosphate + formate + H(+). It participates in cofactor biosynthesis; 7,8-dihydroneopterin triphosphate biosynthesis; 7,8-dihydroneopterin triphosphate from GTP: step 1/1. The sequence is that of GTP cyclohydrolase 1 2 (folE2) from Nostoc sp. (strain PCC 7120 / SAG 25.82 / UTEX 2576).